Reading from the N-terminus, the 398-residue chain is Galactose-3-O-sulfotransferase 2 (398 aa).

Residues Met-1–Arg-10 lie on the Cytoplasmic side of the membrane. The helical; Signal-anchor for type II membrane protein transmembrane segment at Tyr-11–Leu-31 threads the bilayer. The Lumenal segment spans residues His-32–Ala-398. N-linked (GlcNAc...) asparagine glycans are attached at residues Asn-79, Asn-132, Asn-179, Asn-287, Asn-330, and Asn-360.

It belongs to the galactose-3-O-sulfotransferase family. As to expression, ubiquitous. Detected in heart, stomach, colon, liver and spleen, in epithelial cells lining the lower to middle layer of the crypts in colonic mucosa, hepatocytes surrounding the central vein of the liver, extravillous cytotrophoblasts in the basal plate of the septum of the placenta, renal tubules of the kidney, and neuronal cells of the cerebral cortex.

It is found in the golgi apparatus. It localises to the golgi stack membrane. The protein operates within protein modification; carbohydrate sulfation. With respect to regulation, strongly inhibited by Cu(2+) and Zn(2+). In terms of biological role, transfers a sulfate group to the hydroxyl group at C3 of non-reducing beta-galactosyl residues. Acts both on type 1 (Gal-beta-1,3-GlcNAc) and type 2 (Gal-beta-1,4-GlcNAc) chains with similar efficiency. The sequence is that of Galactose-3-O-sulfotransferase 2 (GAL3ST2) from Homo sapiens (Human).